The primary structure comprises 543 residues: NXPE family member 4 (543 aa).

Residues 1–26 form the signal peptide; sequence MKTLASRKSLWMLLFIVIFWVSFTVF. 3 N-linked (GlcNAc...) asparagine glycosylation sites follow: Asn-91, Asn-159, and Asn-223.

Belongs to the NXPE family.

The protein resides in the secreted. The protein is NXPE family member 4 (Nxpe4) of Mus musculus (Mouse).